Reading from the N-terminus, the 426-residue chain is Phosphomethylpyrimidine synthase (426 aa).

Residues Asn-65, Met-94, Tyr-123, His-162, 184–186 (SRG), 225–228 (DGMR), and Glu-264 each bind substrate. His-268 lines the Zn(2+) pocket. Residue Tyr-291 coordinates substrate. His-332 contacts Zn(2+). [4Fe-4S] cluster-binding residues include Cys-408, Cys-411, and Cys-415.

This sequence belongs to the ThiC family. [4Fe-4S] cluster serves as cofactor.

It catalyses the reaction 5-amino-1-(5-phospho-beta-D-ribosyl)imidazole + S-adenosyl-L-methionine = 4-amino-2-methyl-5-(phosphooxymethyl)pyrimidine + CO + 5'-deoxyadenosine + formate + L-methionine + 3 H(+). Its pathway is cofactor biosynthesis; thiamine diphosphate biosynthesis. In terms of biological role, catalyzes the synthesis of the hydroxymethylpyrimidine phosphate (HMP-P) moiety of thiamine from aminoimidazole ribotide (AIR) in a radical S-adenosyl-L-methionine (SAM)-dependent reaction. This is Phosphomethylpyrimidine synthase from Methanococcus maripaludis (strain C5 / ATCC BAA-1333).